The following is a 553-amino-acid chain: Arginine--tRNA ligase (553 aa).

Residues Pro-132–His-140 carry the 'HIGH' region motif.

The protein belongs to the class-I aminoacyl-tRNA synthetase family. As to quaternary structure, monomer.

Its subcellular location is the cytoplasm. The enzyme catalyses tRNA(Arg) + L-arginine + ATP = L-arginyl-tRNA(Arg) + AMP + diphosphate. The chain is Arginine--tRNA ligase from Staphylococcus aureus (strain N315).